The primary structure comprises 279 residues: Thioredoxin domain-containing protein plp1 (279 aa).

The span at 56–70 (RKEDTQDYNEPELHN) shows a compositional bias: basic and acidic residues. The interval 56 to 75 (RKEDTQDYNEPELHNSNDPT) is disordered. Positions 137 to 248 (FLTVENEREV…LEFRLLKSSA (112 aa)) constitute a Thioredoxin domain. Residues 254-267 (EESSSNKSIYHDEL) are compositionally biased toward basic and acidic residues. Residues 254–279 (EESSSNKSIYHDELQNNQSDDSDFFE) are disordered. Phosphoserine occurs at positions 272 and 275.

This sequence belongs to the phosducin family.

It is found in the cytoplasm. It localises to the nucleus. Functionally, inhibits early G-protein signaling events following pheromone stimulation. May help create heterodimerizable beta-tubulin by facilitating the efficient transfer of nascent beta-tubulin polypeptides to the folding apparatus. This chain is Thioredoxin domain-containing protein plp1 (plp1), found in Schizosaccharomyces pombe (strain 972 / ATCC 24843) (Fission yeast).